We begin with the raw amino-acid sequence, 257 residues long: Short chain dehydrogenase helC (257 aa).

An N-terminal signal peptide occupies residues 1-22 (MNTAIITGAAQGVGLCIAEALA). An NADP(+)-binding site is contributed by valine 13. Asparagine 46 is a glycosylation site (N-linked (GlcNAc...) asparagine). 2 residues coordinate NADP(+): aspartate 60 and asparagine 87. A glycan (N-linked (GlcNAc...) asparagine) is linked at asparagine 110. Positions 154, 158, 185, and 187 each coordinate NADP(+). The active-site Proton acceptor is the tyrosine 154. Lysine 158 functions as the Lowers pKa of active site Tyr in the catalytic mechanism.

Belongs to the short-chain dehydrogenases/reductases (SDR) family.

It participates in mycotoxin biosynthesis. In terms of biological role, short chain dehydrogenase; part of the gene cluster that mediates the biosynthesis of helvolic acid, an antibacterial nortriterpenoid. Protostadienol synthase helA cyclizes (3S)-oxidosqualene to (17Z)-protosta-17(20),24-dien-3-beta-ol (protostadienol). The synthesis of protostadienol is followed by several steps of monooxygenation, dehydrogenation, and acyl transfer to yield the final helvolic acid. Following the cyclization to the tetracyclic protostadienol by helA, cytochrome P450 monooxygenases helB1-mediated and helB2-mediated oxidation at C-4 and C-16, acyltransferase helD2-dependent acetylation of 16-OH, oxidation of C-21 by cytochrome P450 monooxygenase helB4, and short chain dehydrogenase helC-dependent oxidative decarboxylation yield the fusidane skeleton. This intermediate is further modified in three additional steps mediated by the cytochrome P450 monooxygenase helB3, the acyltransferase helD1, and the 3-ketosteroid 1-dehydrogenase helE to give helvolic acid. Compared with the late stages in the biosynthesis of helvolic acid, enzymes involved in the early stage modifications act in a relatively strict order. The hydroxylation of C-16 by helB1 and subsequent acetylation by helD2 should occur before the helB3-mediated oxidation of C-21. C-4 demethylation in fusidane-type antibiotics proceeds in an unusual manner though it is also achieved by oxidative decarboxylation. The methyl group at C-4 beta position is oxidized by helB1 and subsequently removed by the short chain dehydrogenase helC. The polypeptide is Short chain dehydrogenase helC (Aspergillus fumigatus (strain ATCC MYA-4609 / CBS 101355 / FGSC A1100 / Af293) (Neosartorya fumigata)).